The following is a 400-amino-acid chain: Aminomethyltransferase, mitochondrial (400 aa).

Glu-221, Arg-250, and Tyr-397 together coordinate substrate.

The protein belongs to the GcvT family. As to quaternary structure, component of the glycine decarboxylase complex (GDC), which is composed of four proteins: P, T, L and H.

It localises to the mitochondrion. The catalysed reaction is N(6)-[(R)-S(8)-aminomethyldihydrolipoyl]-L-lysyl-[protein] + (6S)-5,6,7,8-tetrahydrofolate = N(6)-[(R)-dihydrolipoyl]-L-lysyl-[protein] + (6R)-5,10-methylene-5,6,7,8-tetrahydrofolate + NH4(+). Its function is as follows. The glycine cleavage system (glycine decarboxylase complex) catalyzes the degradation of glycine. The sequence is that of Aminomethyltransferase, mitochondrial (GCV1) from Saccharomyces cerevisiae (strain ATCC 204508 / S288c) (Baker's yeast).